The following is a 224-amino-acid chain: uncharacterized protein (224 aa).

The segment at 203-224 is disordered; it reads ELKKKKKKKIKKPKEIRNQKNV. Basic residues predominate over residues 204 to 214; sequence LKKKKKKKIKK. Residues 215-224 are compositionally biased toward basic and acidic residues; sequence PKEIRNQKNV.

This is an uncharacterized protein from Mycoplasma genitalium (strain ATCC 33530 / DSM 19775 / NCTC 10195 / G37) (Mycoplasmoides genitalium).